A 123-amino-acid polypeptide reads, in one-letter code: Small ribosomal subunit protein uS12 (123 aa).

D89 bears the 3-methylthioaspartic acid mark.

Belongs to the universal ribosomal protein uS12 family. In terms of assembly, part of the 30S ribosomal subunit. Contacts proteins S8 and S17. May interact with IF1 in the 30S initiation complex.

With S4 and S5 plays an important role in translational accuracy. Its function is as follows. Interacts with and stabilizes bases of the 16S rRNA that are involved in tRNA selection in the A site and with the mRNA backbone. Located at the interface of the 30S and 50S subunits, it traverses the body of the 30S subunit contacting proteins on the other side and probably holding the rRNA structure together. The combined cluster of proteins S8, S12 and S17 appears to hold together the shoulder and platform of the 30S subunit. This Bartonella bacilliformis (strain ATCC 35685 / KC583 / Herrer 020/F12,63) protein is Small ribosomal subunit protein uS12.